The chain runs to 509 residues: ATP synthase subunit alpha (509 aa).

An ATP-binding site is contributed by Gly-169–Thr-176.

Belongs to the ATPase alpha/beta chains family. F-type ATPases have 2 components, CF(1) - the catalytic core - and CF(0) - the membrane proton channel. CF(1) has five subunits: alpha(3), beta(3), gamma(1), delta(1), epsilon(1). CF(0) has three main subunits: a(1), b(2) and c(9-12). The alpha and beta chains form an alternating ring which encloses part of the gamma chain. CF(1) is attached to CF(0) by a central stalk formed by the gamma and epsilon chains, while a peripheral stalk is formed by the delta and b chains.

It is found in the cell inner membrane. The enzyme catalyses ATP + H2O + 4 H(+)(in) = ADP + phosphate + 5 H(+)(out). Produces ATP from ADP in the presence of a proton gradient across the membrane. The alpha chain is a regulatory subunit. The sequence is that of ATP synthase subunit alpha from Chelativorans sp. (strain BNC1).